The chain runs to 103 residues: Light-independent protochlorophyllide reductase subunit B (103 aa).

The protein belongs to the ChlB/BchB/BchZ family. As to quaternary structure, protochlorophyllide reductase is composed of three subunits; ChlL, ChlN and ChlB. Forms a heterotetramer of two ChlB and two ChlN subunits. [4Fe-4S] cluster serves as cofactor.

The protein localises to the plastid. The protein resides in the chloroplast. It catalyses the reaction chlorophyllide a + oxidized 2[4Fe-4S]-[ferredoxin] + 2 ADP + 2 phosphate = protochlorophyllide a + reduced 2[4Fe-4S]-[ferredoxin] + 2 ATP + 2 H2O. The protein operates within porphyrin-containing compound metabolism; chlorophyll biosynthesis (light-independent). Functionally, component of the dark-operative protochlorophyllide reductase (DPOR) that uses Mg-ATP and reduced ferredoxin to reduce ring D of protochlorophyllide (Pchlide) to form chlorophyllide a (Chlide). This reaction is light-independent. The NB-protein (ChlN-ChlB) is the catalytic component of the complex. This Sphaeropteris cooperi (Australian tree fern) protein is Light-independent protochlorophyllide reductase subunit B (chlB).